A 177-amino-acid polypeptide reads, in one-letter code: MFPKTLTDSKYKAFVDGEIKEISLQDYIGKYVVLAFYPLDFTFVCPTEINRFSDLKGAFLRRNAVVLLISCDSVYTHKAWASIPREQNGVLGTAWPMVWDAKRELCNQFGLYDEENGHPMRSTVILAKDLSVRHISSNYHAIGRSVDEIIRLIDAITFNDENGDICPAEWRSENKDN.

Positions 1-158 constitute a Thioredoxin domain; that stretch reads MFPKTLTDSK…IIRLIDAITF (158 aa). Cysteine 45 acts as the Cysteine sulfenic acid (-SOH) intermediate in catalysis.

Belongs to the peroxiredoxin family. AhpC/Prx1 subfamily. As to quaternary structure, homodimer; disulfide-linked, upon oxidation.

The catalysed reaction is a hydroperoxide + [thioredoxin]-dithiol = an alcohol + [thioredoxin]-disulfide + H2O. In terms of biological role, thiol-specific peroxidase that catalyzes the reduction of hydrogen peroxide and organic hydroperoxides to water and alcohols, respectively. Plays a role in cell protection against oxidative stress by detoxifying peroxides and as sensor of hydrogen peroxide-mediated signaling events. The polypeptide is Putative thioredoxin peroxidase (Encephalitozoon cuniculi (strain GB-M1) (Microsporidian parasite)).